Here is a 203-residue protein sequence, read N- to C-terminus: Large ribosomal subunit protein uL13 (203 aa).

Ala-2 is subject to N-acetylalanine. Arg-59 is subject to Citrulline. Residue Ser-77 is modified to Phosphoserine; by ZIPK/DAPK3. Arg-140 is subject to Citrulline. Lys-191 carries the post-translational modification N6-acetyllysine.

This sequence belongs to the universal ribosomal protein uL13 family. As to quaternary structure, component of the 60S ribosome. Component of the GAIT complex. Interacts with EIF4G1. In terms of processing, phosphorylation at Ser-77 upon interferon-gamma treatment in macrophages involves a DAPK1-DAPK3 kinase cascade and is causing release from the ribosome, association with the GAIT complex and subsequent involvement in transcript-selective translation inhibition. Post-translationally, citrullinated by PADI4.

The protein localises to the cytoplasm. In terms of biological role, associated with ribosomes but is not required for canonical ribosome function and has extra-ribosomal functions. Component of the GAIT (gamma interferon-activated inhibitor of translation) complex which mediates interferon-gamma-induced transcript-selective translation inhibition in inflammation processes. Upon interferon-gamma activation and subsequent phosphorylation dissociates from the ribosome and assembles into the GAIT complex which binds to stem loop-containing GAIT elements in the 3'-UTR of diverse inflammatory mRNAs (such as ceruplasmin) and suppresses their translation. In the GAIT complex interacts with m7G cap-bound eIF4G at or near the eIF3-binding site and blocks the recruitment of the 43S ribosomal complex. Involved in methylation of rRNA. The protein is Large ribosomal subunit protein uL13 (Rpl13a) of Mus musculus (Mouse).